Reading from the N-terminus, the 125-residue chain is Fluoride-specific ion channel FluC (125 aa).

The next 4 membrane-spanning stretches (helical) occupy residues 4 to 24, 35 to 55, 69 to 89, and 103 to 123; these read WLFV…ISEL, YGTL…FALI, LMVG…DTVV, and MGLN…LVAS. The Na(+) site is built by Gly-75 and Thr-78.

The protein belongs to the fluoride channel Fluc/FEX (TC 1.A.43) family.

It is found in the cell inner membrane. It carries out the reaction fluoride(in) = fluoride(out). With respect to regulation, na(+) is not transported, but it plays an essential structural role and its presence is essential for fluoride channel function. Fluoride-specific ion channel. Important for reducing fluoride concentration in the cell, thus reducing its toxicity. The chain is Fluoride-specific ion channel FluC from Aeromonas salmonicida (strain A449).